Here is a 391-residue protein sequence, read N- to C-terminus: Tryptophan synthase beta chain (391 aa).

The residue at position 84 (Lys-84) is an N6-(pyridoxal phosphate)lysine.

Belongs to the TrpB family. Tetramer of two alpha and two beta chains. Pyridoxal 5'-phosphate is required as a cofactor.

It carries out the reaction (1S,2R)-1-C-(indol-3-yl)glycerol 3-phosphate + L-serine = D-glyceraldehyde 3-phosphate + L-tryptophan + H2O. Its pathway is amino-acid biosynthesis; L-tryptophan biosynthesis; L-tryptophan from chorismate: step 5/5. In terms of biological role, the beta subunit is responsible for the synthesis of L-tryptophan from indole and L-serine. This chain is Tryptophan synthase beta chain, found in Thermoanaerobacter sp. (strain X514).